A 433-amino-acid chain; its full sequence is Chaperone SurA (433 aa).

An N-terminal signal peptide occupies residues 1–28 (MTAITRITLTGALLAAALLLAALQPARA). PpiC domains are found at residues 174 to 277 (NQEY…KLMD) and 286 to 386 (VTET…QVTD).

Its subcellular location is the periplasm. The catalysed reaction is [protein]-peptidylproline (omega=180) = [protein]-peptidylproline (omega=0). Chaperone involved in the correct folding and assembly of outer membrane proteins. Recognizes specific patterns of aromatic residues and the orientation of their side chains, which are found more frequently in integral outer membrane proteins. May act in both early periplasmic and late outer membrane-associated steps of protein maturation. This Alkalilimnicola ehrlichii (strain ATCC BAA-1101 / DSM 17681 / MLHE-1) protein is Chaperone SurA.